The sequence spans 108 residues: UPF0060 membrane protein Rsph17029_0436 (108 aa).

A run of 4 helical transmembrane segments spans residues 5-25 (LAAY…VWAW), 32-52 (ALWL…LALT), 62-82 (AVYG…VEGV), and 86-106 (RWDM…LWAP).

It belongs to the UPF0060 family.

It is found in the cell inner membrane. The sequence is that of UPF0060 membrane protein Rsph17029_0436 from Cereibacter sphaeroides (strain ATCC 17029 / ATH 2.4.9) (Rhodobacter sphaeroides).